The sequence spans 122 residues: Large ribosomal subunit protein bL12 (122 aa).

This sequence belongs to the bacterial ribosomal protein bL12 family. In terms of assembly, homodimer. Part of the ribosomal stalk of the 50S ribosomal subunit. Forms a multimeric L10(L12)X complex, where L10 forms an elongated spine to which 2 to 4 L12 dimers bind in a sequential fashion. Binds GTP-bound translation factors.

Its function is as follows. Forms part of the ribosomal stalk which helps the ribosome interact with GTP-bound translation factors. Is thus essential for accurate translation. The protein is Large ribosomal subunit protein bL12 of Azotobacter vinelandii (strain DJ / ATCC BAA-1303).